Consider the following 448-residue polypeptide: Porin AaxA (448 aa).

Residues 1 to 24 (MASFRSSLLSALCAYGMMVMPAYA) form the signal peptide.

Belongs to the OprB family.

It localises to the cell outer membrane. Its function is as follows. Facilitates L-arginine uptake, as part of the AaxABC system. The arginine uptake by the bacterium in the macrophage may be a virulence factor against the host innate immune response. In Chlamydia abortus (strain DSM 27085 / S26/3) (Chlamydophila abortus), this protein is Porin AaxA (aaxA).